A 246-amino-acid chain; its full sequence is Large ribosomal subunit protein uL3 (246 aa).

Disordered stretches follow at residues S140–M162 and D215–A246. N5-methylglutamine is present on Q151. Residues E234–A246 are compositionally biased toward low complexity.

Belongs to the universal ribosomal protein uL3 family. In terms of assembly, part of the 50S ribosomal subunit. Forms a cluster with proteins L14 and L19. Post-translationally, methylated by PrmB.

Its function is as follows. One of the primary rRNA binding proteins, it binds directly near the 3'-end of the 23S rRNA, where it nucleates assembly of the 50S subunit. The polypeptide is Large ribosomal subunit protein uL3 (Methylorubrum populi (strain ATCC BAA-705 / NCIMB 13946 / BJ001) (Methylobacterium populi)).